The chain runs to 499 residues: MLQETISLTPLGQPLIAGFVVVSAVLYLLYNTQQWRPNNLPLLNDGGPFDFLQVTAVNRFRRDARRLIKSGFDSYKNVFAMRTDVGVELFASPEYADQFRNHPSLKVFPFTAKMHHGHLPGFELCRSQPVEDRILIESVRTQLAQSLGKLIQPLASDIGEAISDRWPSESGWQEIVLGSVVERTIAQGTSSVYCLDEAWPEFVVKMEMALGMASAALSAWPVMLRRIVAKFLPECLELYRIMKSGRELMSRDMRRRTALQASTGEEPLNFFEWFKEASHGEEYDELILNLRIAFASMHGLCDHLVKILLRLSEDPQLVSDLRKEVIQVYETHGWSKTALYHLKLMDSAFKEVQRVDPILFVGRVAVADVTLKDGLIIQKGQSIRISGHTMWDEDKYPDAAHFDPYRFYRLRQAPGQENTAQFTSPTSDHLGFGYGGRACPGRFFAAAVLKISLCHVLMKYDIKPANGETGQHVWEFAAAINANMTAKVLVRRRQPEIQI.

The chain crosses the membrane as a helical span at residues proline 10 to tyrosine 30. Cysteine 439 contacts heme. Asparagine 483 carries an N-linked (GlcNAc...) asparagine glycan.

This sequence belongs to the cytochrome P450 family. Requires heme as cofactor.

It is found in the membrane. It functions in the pathway secondary metabolite biosynthesis; terpenoid biosynthesis. In terms of biological role, cytochrome P450 monooxygenase; part of the gene cluster B that mediates the biosynthesis of austinol and dehydroaustinol, two fungal meroterpenoids. The first step of the pathway is the synthesis of 3,5-dimethylorsellinic acid by the polyketide synthase ausA. 3,5-dimethylorsellinic acid is then prenylated by the polyprenyl transferase ausN. Further epoxidation by the FAD-dependent monooxygenase ausM and cyclization by the probable terpene cyclase ausL lead to the formation of protoaustinoid A. Protoaustinoid A is then oxidized to spiro-lactone preaustinoid A3 by the combined action of the FAD-binding monooxygenases ausB and ausC, and the dioxygenase ausE. Acid-catalyzed keto-rearrangement and ring contraction of the tetraketide portion of preaustinoid A3 by ausJ lead to the formation of preaustinoid A4. The aldo-keto reductase ausK, with the help of ausH, is involved in the next step by transforming preaustinoid A4 into isoaustinone which is in turn hydroxylated by the P450 monooxygenase ausI to form austinolide. Finally, the cytochrome P450 monooxygenase ausG modifies austinolide to austinol. Austinol can be further modified to dehydroaustinol which forms a diffusible complex with diorcinol that initiates conidiation. Due to genetic rearrangements of the clusters and the subsequent loss of some enzymes, the end products of the Emericella nidulans austinoid biosynthesis clusters are austinol and dehydroaustinol, even if additional enzymes, such as the O-acetyltransferase ausQ and the cytochrome P450 monooxygenase ausR are still functional. This chain is Cytochrome P450 monooxygenase ausI, found in Emericella nidulans (strain FGSC A4 / ATCC 38163 / CBS 112.46 / NRRL 194 / M139) (Aspergillus nidulans).